The primary structure comprises 1644 residues: Kinesin-like protein unc-104 (1644 aa).

Residues 3 to 351 (SVKVAVRVRP…LRYADRAKQI (349 aa)) enclose the Kinesin motor domain. 97–104 (GQTGAGKS) contributes to the ATP binding site. A coiled-coil region spans residues 358–436 (NEDANAKLIR…IAELNETWEE (79 aa)). The FHA domain occupies 499-565 (TRLGTSEANV…LQTGSRVILG (67 aa)). Residues 574–591 (HPEQAREKREKPKDKDVG) are compositionally biased toward basic and acidic residues. The interval 574–598 (HPEQAREKREKPKDKDVGENPGGNA) is disordered. Residues 631–672 (EQFKREKLAADQEFEEQRKTYEARIDALQKQVEEQSMTMSMY) are a coiled coil. 2 disordered regions span residues 953 to 985 (EQEDADSGRGDSSVASELHESNEHEPGEHLQPG) and 1419 to 1440 (HMVIPPSPQTPVKDQQTPTLPE). Residues 969 to 984 (ELHESNEHEPGEHLQP) show a composition bias toward basic and acidic residues. Residues 1428–1437 (TPVKDQQTPT) show a composition bias toward polar residues. The region spanning 1542–1640 (VVARKGYLNV…WLYAINPLLA (99 aa)) is the PH domain.

This sequence belongs to the TRAFAC class myosin-kinesin ATPase superfamily. Kinesin family. Unc-104 subfamily. Monomer.

Its subcellular location is the cytoplasm. It is found in the cytoskeleton. Functionally, required for presynaptic maturation, has a role in axonal transport of dense-core vesicles carrying synaptic vesicle precursors, components required for the morphological transformation of axonal growth cones to mature boutons. This chain is Kinesin-like protein unc-104, found in Aedes aegypti (Yellowfever mosquito).